We begin with the raw amino-acid sequence, 221 residues long: uncharacterized protein (221 aa).

Positions 1–23 (MNKLIQLALFFTLMLTGCSNSST) are cleaved as a signal peptide. A disordered region spans residues 67–221 (ELGKRKAKEE…QGYIDPEDAP (155 aa)). Positions 68 to 150 (LGKRKAKEEA…EQKANAEKKR (83 aa)) are enriched in basic and acidic residues. Positions 70–161 (KRKAKEEAEK…SQAQRQQTEA (92 aa)) form a coiled coil. Polar residues predominate over residues 152 to 161 (SQAQRQQTEA). Positions 162-174 (PSSNSQDPPSSSS) are enriched in low complexity. A compositionally biased stretch (polar residues) spans 175-184 (QTDKTIQQPA). The span at 195–205 (YEERKKWHDDQ) shows a compositional bias: basic and acidic residues.

This is an uncharacterized protein from Bacillus subtilis (strain 168).